A 485-amino-acid chain; its full sequence is NADH-quinone oxidoreductase subunit N (485 aa).

14 helical membrane passes run 8-28, 35-55, 71-91, 105-125, 127-147, 159-179, 203-223, 235-255, 271-291, 297-317, 326-346, 373-393, 408-430, and 455-475; these read LIAL…MLSI, FLNA…LWFV, GFAM…CTFA, FYLL…ANHL, ALFL…GYAF, YTIL…LVYA, LLAG…LVPF, PAPV…GVVM, VVLG…ALSQ, LLGY…IVLQ, VGVY…VVSL, AAVM…LGFI, WWLV…RVAV, and IVVL…QPLI.

Belongs to the complex I subunit 2 family. In terms of assembly, NDH-1 is composed of 13 different subunits. Subunits NuoA, H, J, K, L, M, N constitute the membrane sector of the complex.

It is found in the cell inner membrane. It catalyses the reaction a quinone + NADH + 5 H(+)(in) = a quinol + NAD(+) + 4 H(+)(out). Functionally, NDH-1 shuttles electrons from NADH, via FMN and iron-sulfur (Fe-S) centers, to quinones in the respiratory chain. The immediate electron acceptor for the enzyme in this species is believed to be ubiquinone. Couples the redox reaction to proton translocation (for every two electrons transferred, four hydrogen ions are translocated across the cytoplasmic membrane), and thus conserves the redox energy in a proton gradient. This Salmonella choleraesuis (strain SC-B67) protein is NADH-quinone oxidoreductase subunit N.